The primary structure comprises 75 residues: Acyl carrier protein (75 aa).

Positions 1–75 (MALFDDVKEV…GDAIKFIENV (75 aa)) constitute a Carrier domain. The residue at position 36 (serine 36) is an O-(pantetheine 4'-phosphoryl)serine.

Belongs to the acyl carrier protein (ACP) family. In terms of processing, 4'-phosphopantetheine is transferred from CoA to a specific serine of apo-ACP by AcpS. This modification is essential for activity because fatty acids are bound in thioester linkage to the sulfhydryl of the prosthetic group.

Its subcellular location is the cytoplasm. Its pathway is lipid metabolism; fatty acid biosynthesis. Its function is as follows. Carrier of the growing fatty acid chain in fatty acid biosynthesis. The sequence is that of Acyl carrier protein from Sulfurovum sp. (strain NBC37-1).